We begin with the raw amino-acid sequence, 413 residues long: Histidine--tRNA ligase (413 aa).

It belongs to the class-II aminoacyl-tRNA synthetase family. In terms of assembly, homodimer.

It localises to the cytoplasm. It carries out the reaction tRNA(His) + L-histidine + ATP = L-histidyl-tRNA(His) + AMP + diphosphate + H(+). This Wolbachia sp. subsp. Brugia malayi (strain TRS) protein is Histidine--tRNA ligase.